Here is a 353-residue protein sequence, read N- to C-terminus: Dihydroorotate dehydrogenase (quinone) (353 aa).

Residues 66 to 70 (AGFDK) and Thr-90 contribute to the FMN site. Residue Lys-70 participates in substrate binding. 115–119 (NRMGF) contributes to the substrate binding site. Asn-143 and Asn-176 together coordinate FMN. Asn-176 is a binding site for substrate. The Nucleophile role is filled by Ser-179. Position 181 (Asn-181) interacts with substrate. FMN is bound by residues Lys-212 and Thr-240. 241-242 (NT) provides a ligand contact to substrate. FMN is bound by residues Gly-264, Gly-293, and 314-315 (YT).

This sequence belongs to the dihydroorotate dehydrogenase family. Type 2 subfamily. Monomer. Requires FMN as cofactor.

It is found in the cell membrane. It carries out the reaction (S)-dihydroorotate + a quinone = orotate + a quinol. Its pathway is pyrimidine metabolism; UMP biosynthesis via de novo pathway; orotate from (S)-dihydroorotate (quinone route): step 1/1. In terms of biological role, catalyzes the conversion of dihydroorotate to orotate with quinone as electron acceptor. The protein is Dihydroorotate dehydrogenase (quinone) of Mycolicibacterium vanbaalenii (strain DSM 7251 / JCM 13017 / BCRC 16820 / KCTC 9966 / NRRL B-24157 / PYR-1) (Mycobacterium vanbaalenii).